A 334-amino-acid chain; its full sequence is Sucrose operon repressor (334 aa).

An HTH lacI-type domain is found at 6-63 (VTIKDIAELAGVSKATASLVLNGRGKELRVAQETRERVLAIAREQHYQPSIHARSLRD). The segment at residues 8 to 27 (IKDIAELAGVSKATASLVLN) is a DNA-binding region (H-T-H motif).

Functionally, repressor for the scr operon. Binds D-fructose as an inducer. This Klebsiella pneumoniae protein is Sucrose operon repressor (scrR).